The chain runs to 234 residues: Probable pectate lyase F (234 aa).

An N-terminal signal peptide occupies residues 1 to 17; the sequence is MRSTAAVLSILLPGALA. N-linked (GlcNAc...) asparagine glycosylation is present at Asn-168.

The protein belongs to the polysaccharide lyase 3 family. Ca(2+) is required as a cofactor.

Its subcellular location is the secreted. It catalyses the reaction Eliminative cleavage of (1-&gt;4)-alpha-D-galacturonan to give oligosaccharides with 4-deoxy-alpha-D-galact-4-enuronosyl groups at their non-reducing ends.. In terms of biological role, pectinolytic enzyme consist of four classes of enzymes: pectin lyase, polygalacturonase, pectin methylesterase and rhamnogalacturonase. Among pectinolytic enzymes, pectin lyase is the most important in depolymerization of pectin, since it cleaves internal glycosidic bonds of highly methylated pectins. Favors pectate, the anion, over pectin, the methyl ester. In Aspergillus terreus (strain NIH 2624 / FGSC A1156), this protein is Probable pectate lyase F (plyF).